A 342-amino-acid chain; its full sequence is Spore photoproduct lyase (342 aa).

In terms of domain architecture, Radical SAM core spans 77–305 (SKPSAEYAIP…EEKRRYKWGR (229 aa)). Residues C91, C95, and C98 each coordinate [4Fe-4S] cluster. The segment at residues 218–235 (EAAVKVAKAGYPLGFIVA) is a DNA-binding region (H-T-H motif).

Belongs to the radical SAM superfamily. SPL family. In terms of assembly, monomer or homodimer. [4Fe-4S] cluster serves as cofactor. S-adenosyl-L-methionine is required as a cofactor.

It carries out the reaction (5R)-5,6-dihydro-5-(thymidin-7-yl)thymidine in DNA = a thymidine dimer in DNA. Its function is as follows. Involved in repair of UV radiation-induced DNA damage during spore germination. Can repair thymine dimer 5-thyminyl-5,6-dihydrothymine (known as spore photoproduct (SP)) by in situ monomerization of SP to two thymines. The protein is Spore photoproduct lyase (splB) of Bacillus subtilis (strain 168).